A 215-amino-acid chain; its full sequence is 3-isopropylmalate dehydratase small subunit (215 aa).

The protein belongs to the LeuD family. LeuD type 1 subfamily. Heterodimer of LeuC and LeuD.

The catalysed reaction is (2R,3S)-3-isopropylmalate = (2S)-2-isopropylmalate. It functions in the pathway amino-acid biosynthesis; L-leucine biosynthesis; L-leucine from 3-methyl-2-oxobutanoate: step 2/4. In terms of biological role, catalyzes the isomerization between 2-isopropylmalate and 3-isopropylmalate, via the formation of 2-isopropylmaleate. The chain is 3-isopropylmalate dehydratase small subunit from Saccharophagus degradans (strain 2-40 / ATCC 43961 / DSM 17024).